A 442-amino-acid chain; its full sequence is GTPase Der (442 aa).

EngA-type G domains are found at residues 3-167 (PTIV…PADD) and 177-350 (PRVA…AAAM). Residues 9 to 16 (GRPNVGKS), 56 to 60 (DTAGF), 119 to 122 (NKAE), 183 to 190 (GRPNVGKS), 230 to 234 (DTAGL), and 295 to 298 (NKWD) contribute to the GTP site. The KH-like domain maps to 351–435 (SNLSTPRLTR…PLRIQFRTAH (85 aa)).

The protein belongs to the TRAFAC class TrmE-Era-EngA-EngB-Septin-like GTPase superfamily. EngA (Der) GTPase family. In terms of assembly, associates with the 50S ribosomal subunit.

Its function is as follows. GTPase that plays an essential role in the late steps of ribosome biogenesis. The protein is GTPase Der of Azoarcus sp. (strain BH72).